Consider the following 309-residue polypeptide: Aspartate carbamoyltransferase catalytic subunit (309 aa).

Positions 48 and 49 each coordinate carbamoyl phosphate. An L-aspartate-binding site is contributed by lysine 76. Positions 98, 128, and 131 each coordinate carbamoyl phosphate. Residues arginine 161 and arginine 211 each coordinate L-aspartate. Residues alanine 250 and proline 251 each contribute to the carbamoyl phosphate site.

It belongs to the aspartate/ornithine carbamoyltransferase superfamily. ATCase family. Heterododecamer (2C3:3R2) of six catalytic PyrB chains organized as two trimers (C3), and six regulatory PyrI chains organized as three dimers (R2).

The enzyme catalyses carbamoyl phosphate + L-aspartate = N-carbamoyl-L-aspartate + phosphate + H(+). It functions in the pathway pyrimidine metabolism; UMP biosynthesis via de novo pathway; (S)-dihydroorotate from bicarbonate: step 2/3. Functionally, catalyzes the condensation of carbamoyl phosphate and aspartate to form carbamoyl aspartate and inorganic phosphate, the committed step in the de novo pyrimidine nucleotide biosynthesis pathway. The polypeptide is Aspartate carbamoyltransferase catalytic subunit (Oceanobacillus iheyensis (strain DSM 14371 / CIP 107618 / JCM 11309 / KCTC 3954 / HTE831)).